The chain runs to 151 residues: UPF0756 membrane protein LBA0919 (151 aa).

The next 4 helical transmembrane spans lie at 4-24 (WLFL…SLII), 52-72 (WGVT…QIGF), 78-98 (TFKT…AVLS), and 115-135 (LVLG…GPVI).

This sequence belongs to the UPF0756 family.

It localises to the cell membrane. This Lactobacillus acidophilus (strain ATCC 700396 / NCK56 / N2 / NCFM) protein is UPF0756 membrane protein LBA0919.